A 414-amino-acid chain; its full sequence is Cyclin-B1-3 (414 aa).

This sequence belongs to the cyclin family. Cyclin AB subfamily. As to expression, expressed in roots, stems and flowers.

The protein is Cyclin-B1-3 (CYCB1-3) of Arabidopsis thaliana (Mouse-ear cress).